The chain runs to 207 residues: Ribosomal RNA large subunit methyltransferase E (207 aa).

Residues G49, W51, D69, D87, and D111 each contribute to the S-adenosyl-L-methionine site. K151 acts as the Proton acceptor in catalysis.

This sequence belongs to the class I-like SAM-binding methyltransferase superfamily. RNA methyltransferase RlmE family.

It localises to the cytoplasm. It carries out the reaction uridine(2552) in 23S rRNA + S-adenosyl-L-methionine = 2'-O-methyluridine(2552) in 23S rRNA + S-adenosyl-L-homocysteine + H(+). In terms of biological role, specifically methylates the uridine in position 2552 of 23S rRNA at the 2'-O position of the ribose in the fully assembled 50S ribosomal subunit. This chain is Ribosomal RNA large subunit methyltransferase E, found in Oleidesulfovibrio alaskensis (strain ATCC BAA-1058 / DSM 17464 / G20) (Desulfovibrio alaskensis).